Here is a 173-residue protein sequence, read N- to C-terminus: Signal peptidase complex catalytic subunit SEC11 (173 aa).

At 1–15 (MLGVSGMQPRQLAAQ) the chain is on the cytoplasmic side. The helical; Signal-anchor for type II membrane protein transmembrane segment at 16-36 (ILNFALVLSTAFMMWKGLSVV) threads the bilayer. Over 37 to 173 (SDSSSPIVVV…MGVMVVLQRE (137 aa)) the chain is Lumenal. Residues Ser-50, His-89, and Asp-115 each act as charge relay system in the active site. A C-terminal short (CTS) helix region spans residues 159–170 (VMLGLMGVMVVL).

Belongs to the peptidase S26B family. Component of the signal peptidase complex (SPC) composed of a catalytic subunit SEC11 and three accessory subunits SPC1, SPC2 and SPC3. The complex induces a local thinning of the ER membrane which is used to measure the length of the signal peptide (SP) h-region of protein substrates. This ensures the selectivity of the complex towards h-regions shorter than 18-20 amino acids. SPC associates with the translocon complex.

The protein resides in the endoplasmic reticulum membrane. It carries out the reaction Cleavage of hydrophobic, N-terminal signal or leader sequences from secreted and periplasmic proteins.. In terms of biological role, catalytic component of the signal peptidase complex (SPC) which catalyzes the cleavage of N-terminal signal sequences from nascent proteins as they are translocated into the lumen of the endoplasmic reticulum. Specifically cleaves N-terminal signal peptides that contain a hydrophobic alpha-helix (h-region) shorter than 18-20 amino acids. In Leptosphaeria maculans (strain JN3 / isolate v23.1.3 / race Av1-4-5-6-7-8) (Blackleg fungus), this protein is Signal peptidase complex catalytic subunit SEC11 (SEC11).